The chain runs to 457 residues: ATP synthase subunit beta (457 aa).

147 to 154 (GGAGVGKT) provides a ligand contact to ATP.

This sequence belongs to the ATPase alpha/beta chains family. F-type ATPases have 2 components, CF(1) - the catalytic core - and CF(0) - the membrane proton channel. CF(1) has five subunits: alpha(3), beta(3), gamma(1), delta(1), epsilon(1). CF(0) has three main subunits: a(1), b(2) and c(9-12). The alpha and beta chains form an alternating ring which encloses part of the gamma chain. CF(1) is attached to CF(0) by a central stalk formed by the gamma and epsilon chains, while a peripheral stalk is formed by the delta and b chains.

It localises to the cell inner membrane. The enzyme catalyses ATP + H2O + 4 H(+)(in) = ADP + phosphate + 5 H(+)(out). Its function is as follows. Produces ATP from ADP in the presence of a proton gradient across the membrane. The catalytic sites are hosted primarily by the beta subunits. This is ATP synthase subunit beta from Haemophilus influenzae (strain 86-028NP).